We begin with the raw amino-acid sequence, 104 residues long: Large ribosomal subunit protein uL24 (104 aa).

The protein belongs to the universal ribosomal protein uL24 family. As to quaternary structure, part of the 50S ribosomal subunit.

In terms of biological role, one of two assembly initiator proteins, it binds directly to the 5'-end of the 23S rRNA, where it nucleates assembly of the 50S subunit. Functionally, one of the proteins that surrounds the polypeptide exit tunnel on the outside of the subunit. The chain is Large ribosomal subunit protein uL24 from Shewanella sediminis (strain HAW-EB3).